We begin with the raw amino-acid sequence, 1178 residues long: Dual specificity mitogen-activated protein kinase kinase hemipterous (1178 aa).

Disordered regions lie at residues 74–103 and 115–148; these read SGSG…SSSS and ATGT…GGGL. 2 stretches are compositionally biased toward low complexity: residues 91 to 103 and 115 to 128; these read ATPF…SSSS and ATGT…PPTT. In terms of domain architecture, Protein kinase spans 197-456; it reads LKHLGDLGNG…YPELLAQPFI (260 aa). Residues 203–211 and lysine 226 each bind ATP; that span reads LGNGTSGNV. The active-site Proton acceptor is aspartate 320. Residue serine 348 is modified to Phosphoserine. Threonine 352 is modified (phosphothreonine). Residues 522–648 are disordered; that stretch reads TYAGQSPTNP…DESPKKESMF (127 aa). Residues 523–543 show a composition bias toward polar residues; it reads YAGQSPTNPQKTIKPTQIPSY. Low complexity predominate over residues 544–570; sequence QQQQSQFFMQSATQLPQTTTTTPTATT. Positions 574–593 are enriched in gly residues; the sequence is GGSGNGNGRGNGSGGSGNGS. Positions 594 to 608 are enriched in low complexity; sequence GSSSSASPLSPPSAG. Residues 636-646 are compositionally biased toward basic and acidic residues; it reads KYNDESPKKES. Phosphoserine occurs at positions 646 and 662. Disordered stretches follow at residues 715-783, 797-851, 912-933, 999-1026, 1042-1108, and 1122-1178; these read TTTP…LQPG, QNQL…STCS, GTSP…GNGN, TSPV…VVNN, SSSS…NRGQ, and GQPP…TIDQ. A compositionally biased stretch (polar residues) spans 724–734; the sequence is TENSQAYDSCD. Low complexity-rich tracts occupy residues 735–783, 808–817, and 837–851; these read SSSN…LQPG, RYQQQRQQPP, and THST…STCS. The segment covering 912–928 has biased composition (polar residues); sequence GTSPTLQSRSPEQQSDY. The span at 1042–1055 shows a compositional bias: low complexity; that stretch reads SSSSNTSQSTSPTT. Phosphoserine occurs at positions 1150 and 1154. Positions 1168–1178 are enriched in basic and acidic residues; it reads PQRRIYRTIDQ.

This sequence belongs to the protein kinase superfamily. STE Ser/Thr protein kinase family. MAP kinase kinase subfamily. Post-translationally, MAPKK is itself dependent on Ser/Thr phosphorylation for activity catalyzed by MAP kinase kinase kinases. Weakly autophosphorylated.

The enzyme catalyses L-seryl-[protein] + ATP = O-phospho-L-seryl-[protein] + ADP + H(+). The catalysed reaction is L-threonyl-[protein] + ATP = O-phospho-L-threonyl-[protein] + ADP + H(+). It catalyses the reaction L-tyrosyl-[protein] + ATP = O-phospho-L-tyrosyl-[protein] + ADP + H(+). Its function is as follows. Required for the epithelial cell sheet movement called dorsal closure (DC), which allows establishment of the dorsal epidermis. Controls the expression in the dorsal epithelium edges of another dorsal closure gene, puckered (puc). Phosphorylates and activates the MAP kinase bsk; bsk signal transduction pathway mediates an immune response and morphogenesis. The polypeptide is Dual specificity mitogen-activated protein kinase kinase hemipterous (hep) (Drosophila melanogaster (Fruit fly)).